The chain runs to 395 residues: Flagellin D (395 aa).

It belongs to the bacterial flagellin family.

Its subcellular location is the secreted. It is found in the bacterial flagellum. Flagellin is the subunit protein which polymerizes to form the filaments of bacterial flagella. The polypeptide is Flagellin D (flaD) (Rhizobium meliloti (Ensifer meliloti)).